The sequence spans 305 residues: MLAWQDVGAKAAPSHHKISFSVLDILDPQKFTRAALPPVRLAALEAKKSLEEVEAGQDACSGNPIGSQETPDAVGRGIDPGSPVEGSEAEEEEEAEDAGRAHQPERWQGVHEGSPEARAVAVGTEESGAEGLPASPGSPGSPRPRRRRAESSCAKPRRARTAFTYEQLVALENKFRATRYLSVCERLNLALSLSLTETQVKIWFQNRRTKWKKQNPGADGAVQAGGGAPQPGTPGAVAGGGGSATGSSPGPPVPGALPYQTFPTYPATNVLFPAASFPLTTAANGSPFTPFLGPSYLTPFYAPHL.

Disordered stretches follow at residues 51–158 (EEVE…KPRR) and 210–257 (KWKK…PGAL). Residues 87–96 (SEAEEEEEAE) show a composition bias toward acidic residues. Residues 97–115 (DAGRAHQPERWQGVHEGSP) are compositionally biased toward basic and acidic residues. Over residues 129–140 (AEGLPASPGSPG) the composition is skewed to low complexity. Positions 156–215 (PRRARTAFTYEQLVALENKFRATRYLSVCERLNLALSLSLTETQVKIWFQNRRTKWKKQN) form a DNA-binding region, homeobox.

The protein belongs to the NK-1 homeobox family. As to quaternary structure, interacts (via the homeodomain) with HIPK1, HIPK2, and HIPK3. Post-translationally, phosphorylated by HIPK2 in vitro. In terms of tissue distribution, expression detected in the brain, testis and spleen. In the testis, expressed in the germ cells of the seminiferous epithelium, predominantly in elongating spermatids and spermatozoa. Expressed throughout the brain with highest levels in regions of the cerebral cortex, hippocampus, diencephalon, pons, medulla and cerebellum.

It localises to the nucleus. The protein localises to the nucleolus. Transcriptional repressor. May play a role in early development as a Wnt/beta-catenin effector, hence controlling pluripotency and preimplantation development of embryonic stem cells. May promote adipogenesis in mesenchymal stem cells, possibly by inhibiting the expression of the antiadipogenic factor NR2F2. May inhibit osteoblastogenic differentiation. This is NK1 transcription factor-related protein 2 (Nkx1-2) from Mus musculus (Mouse).